We begin with the raw amino-acid sequence, 64 residues long: uncharacterized protein (64 aa).

This is an uncharacterized protein from Escherichia coli O157:H7.